We begin with the raw amino-acid sequence, 1025 residues long: DNA ligase 4 (1025 aa).

The tract at residues 1 to 36 is disordered; the sequence is MMQPTPAPSSAPGSPQRTQAEPEMETPSYPQPPQNV. Residues E289, K291, L292, R296, E349, F387, E447, K452, K469, and K471 each contribute to the ATP site. K291 serves as the catalytic N6-AMP-lysine intermediate. Position 349 (E349) interacts with Mg(2+). E447 serves as a coordination point for Mg(2+). Residues 667-763 form the BRCT 1 domain; the sequence is VKTDIFNGMK…EPAPFKKKYF (97 aa). Positions 773–904 are disordered; it reads ADEYNEDDGE…TTPDVDGDVK (132 aa). Acidic residues-rich tracts occupy residues 775 to 785 and 806 to 816; these read EYNEDDGEEEG and SETEDEDEEQA. Over residues 817 to 838 the composition is skewed to basic and acidic residues; that stretch reads PEIKEEQDGELHEWLKVDDRKS. Over residues 845–870 the composition is skewed to acidic residues; sequence DEEDSVTEDDSDNADVADEEEPDLDD. Residues 891-904 are compositionally biased toward basic and acidic residues; that stretch reads RHRETTPDVDGDVK. Residues 915-1025 enclose the BRCT 2 domain; that stretch reads DPDVIFKHLC…TLLDEEGESF (111 aa).

Belongs to the ATP-dependent DNA ligase family. Requires Mg(2+) as cofactor.

The protein resides in the nucleus. It catalyses the reaction ATP + (deoxyribonucleotide)n-3'-hydroxyl + 5'-phospho-(deoxyribonucleotide)m = (deoxyribonucleotide)n+m + AMP + diphosphate.. In terms of biological role, DNA ligase involved in DNA non-homologous end joining (NHEJ); required for double-strand break (DSB) repair. This chain is DNA ligase 4 (LIG4), found in Coprinopsis cinerea (strain Okayama-7 / 130 / ATCC MYA-4618 / FGSC 9003) (Inky cap fungus).